The following is a 446-amino-acid chain: Amino-acid acetyltransferase (446 aa).

The N-acetyltransferase domain maps to 299 to 438; that stretch reads EQVRDAEIDD…QKLYNFQRKS (140 aa).

Belongs to the acetyltransferase family. ArgA subfamily.

It is found in the cytoplasm. The enzyme catalyses L-glutamate + acetyl-CoA = N-acetyl-L-glutamate + CoA + H(+). The protein operates within amino-acid biosynthesis; L-arginine biosynthesis; N(2)-acetyl-L-ornithine from L-glutamate: step 1/4. This Aliivibrio fischeri (strain ATCC 700601 / ES114) (Vibrio fischeri) protein is Amino-acid acetyltransferase.